A 431-amino-acid polypeptide reads, in one-letter code: C4-dicarboxylate transport protein (431 aa).

The next 8 helical transmembrane spans lie at 8 to 28 (ILYVQVLFAIFVGILLGHFWP), 44 to 64 (LIKMIIGPIIFCTVVTGIAGM), 78 to 98 (LLYFEIVSTFALLIGLGAAHL), 148 to 168 (GDILQILLVSLFFGAALAAIG), 188 to 208 (IVHVITKVAPIGAFGAMAFTI), 222 to 242 (LIGTFYFTAIVFVVFVLGAIA), 307 to 327 (IYMTMAVIFIAQATGIELTLL), and 355 to 375 (AATLAVVPTIPVAGMVLILGI).

Belongs to the dicarboxylate/amino acid:cation symporter (DAACS) (TC 2.A.23) family.

The protein resides in the cell inner membrane. In terms of biological role, responsible for the transport of dicarboxylates such as succinate, fumarate, and malate from the periplasm across the membrane. The protein is C4-dicarboxylate transport protein of Cupriavidus pinatubonensis (strain JMP 134 / LMG 1197) (Cupriavidus necator (strain JMP 134)).